The sequence spans 490 residues: GTPase Der (490 aa).

EngA-type G domains follow at residues 1–165 and 227–400; these read MRIA…QIPV and LKVA…TIAT. GTP-binding positions include 7–14, 54–58, 117–120, 233–240, 280–284, and 345–348; these read GRPNVGKS, DTGGV, NKAD, GHPNVGKS, DTAGL, and NKWD. The region spanning 401-485 is the KH-like domain; it reads TKLSTSLVNK…PFDLEYKAKP (85 aa).

The protein belongs to the TRAFAC class TrmE-Era-EngA-EngB-Septin-like GTPase superfamily. EngA (Der) GTPase family. As to quaternary structure, associates with the 50S ribosomal subunit.

GTPase that plays an essential role in the late steps of ribosome biogenesis. This chain is GTPase Der, found in Chlamydia trachomatis serovar A (strain ATCC VR-571B / DSM 19440 / HAR-13).